Reading from the N-terminus, the 426-residue chain is Tol-Pal system protein TolB (426 aa).

A signal peptide spans 1-24 (MKLKSRFTSIIGVITLFFSQTVTA).

Belongs to the TolB family. As to quaternary structure, the Tol-Pal system is composed of five core proteins: the inner membrane proteins TolA, TolQ and TolR, the periplasmic protein TolB and the outer membrane protein Pal. They form a network linking the inner and outer membranes and the peptidoglycan layer.

It localises to the periplasm. Functionally, part of the Tol-Pal system, which plays a role in outer membrane invagination during cell division and is important for maintaining outer membrane integrity. In Actinobacillus pleuropneumoniae serotype 3 (strain JL03), this protein is Tol-Pal system protein TolB.